The primary structure comprises 239 residues: Endonuclease V (239 aa).

Residues aspartate 50 and aspartate 118 each coordinate Mg(2+).

It belongs to the endonuclease V family. It depends on Mg(2+) as a cofactor.

It is found in the cytoplasm. The catalysed reaction is Endonucleolytic cleavage at apurinic or apyrimidinic sites to products with a 5'-phosphate.. DNA repair enzyme involved in the repair of deaminated bases. Selectively cleaves double-stranded DNA at the second phosphodiester bond 3' to a deoxyinosine leaving behind the intact lesion on the nicked DNA. The sequence is that of Endonuclease V from Xylella fastidiosa (strain 9a5c).